Here is an 84-residue protein sequence, read N- to C-terminus: ATP synthase subunit c (84 aa).

2 helical membrane passes run 9–29 (IIGA…GFAI) and 54–74 (IVAG…LLFI).

The protein belongs to the ATPase C chain family. F-type ATPases have 2 components, F(1) - the catalytic core - and F(0) - the membrane proton channel. F(1) has five subunits: alpha(3), beta(3), gamma(1), delta(1), epsilon(1). F(0) has three main subunits: a(1), b(2) and c(10-14). The alpha and beta chains form an alternating ring which encloses part of the gamma chain. F(1) is attached to F(0) by a central stalk formed by the gamma and epsilon chains, while a peripheral stalk is formed by the delta and b chains.

It localises to the cell inner membrane. F(1)F(0) ATP synthase produces ATP from ADP in the presence of a proton or sodium gradient. F-type ATPases consist of two structural domains, F(1) containing the extramembraneous catalytic core and F(0) containing the membrane proton channel, linked together by a central stalk and a peripheral stalk. During catalysis, ATP synthesis in the catalytic domain of F(1) is coupled via a rotary mechanism of the central stalk subunits to proton translocation. Functionally, key component of the F(0) channel; it plays a direct role in translocation across the membrane. A homomeric c-ring of between 10-14 subunits forms the central stalk rotor element with the F(1) delta and epsilon subunits. This chain is ATP synthase subunit c, found in Glaesserella parasuis serovar 5 (strain SH0165) (Haemophilus parasuis).